The sequence spans 592 residues: 2-succinyl-5-enolpyruvyl-6-hydroxy-3-cyclohexene-1-carboxylate synthase (592 aa).

Belongs to the TPP enzyme family. MenD subfamily. As to quaternary structure, homodimer. Requires Mg(2+) as cofactor. The cofactor is Mn(2+). Thiamine diphosphate is required as a cofactor.

The catalysed reaction is isochorismate + 2-oxoglutarate + H(+) = 5-enolpyruvoyl-6-hydroxy-2-succinyl-cyclohex-3-ene-1-carboxylate + CO2. It functions in the pathway quinol/quinone metabolism; 1,4-dihydroxy-2-naphthoate biosynthesis; 1,4-dihydroxy-2-naphthoate from chorismate: step 2/7. It participates in quinol/quinone metabolism; menaquinone biosynthesis. Catalyzes the thiamine diphosphate-dependent decarboxylation of 2-oxoglutarate and the subsequent addition of the resulting succinic semialdehyde-thiamine pyrophosphate anion to isochorismate to yield 2-succinyl-5-enolpyruvyl-6-hydroxy-3-cyclohexene-1-carboxylate (SEPHCHC). In Leifsonia xyli subsp. xyli (strain CTCB07), this protein is 2-succinyl-5-enolpyruvyl-6-hydroxy-3-cyclohexene-1-carboxylate synthase.